Reading from the N-terminus, the 469-residue chain is Neuraminidase (469 aa).

Residues 1 to 9 lie on the Intravirion side of the membrane; the sequence is MNPNQKIIT. The helical transmembrane segment at 10–30 threads the bilayer; sequence IGSVSLTIATICFLMQIAILV. The interval 11-33 is involved in apical transport and lipid raft association; that stretch reads GSVSLTIATICFLMQIAILVTTV. At 31-469 the chain is on the virion surface side; that stretch reads TTVTLHFKQY…DGADINLMPI (439 aa). Residues 36–88 form a hypervariable stalk region region; it reads HFKQYECSSPPNNQVMPCEPIIIERNITEIVYLTNTTIEKEICPKLVEYRNWS. N-linked (GlcNAc...) asparagine; by host glycans are attached at residues asparagine 61, asparagine 70, and asparagine 86. The interval 91–469 is head of neuraminidase; the sequence is QCKITGFAPF…DGADINLMPI (379 aa). Cystine bridges form between cysteine 92-cysteine 417, cysteine 124-cysteine 129, cysteine 183-cysteine 230, cysteine 232-cysteine 237, cysteine 278-cysteine 291, cysteine 280-cysteine 289, cysteine 318-cysteine 337, and cysteine 421-cysteine 447. A substrate-binding site is contributed by arginine 118. Asparagine 146 carries an N-linked (GlcNAc...) asparagine; by host glycan. Aspartate 151 functions as the Proton donor/acceptor in the catalytic mechanism. Arginine 152 provides a ligand contact to substrate. N-linked (GlcNAc...) asparagine; by host glycans are attached at residues asparagine 200 and asparagine 234. A substrate-binding site is contributed by 276 to 277; sequence EE. Residue arginine 292 participates in substrate binding. The Ca(2+) site is built by aspartate 293, glycine 297, and aspartate 324. Residue arginine 371 participates in substrate binding. Residue asparagine 402 is glycosylated (N-linked (GlcNAc...) asparagine; by host). The active-site Nucleophile is the tyrosine 406.

It belongs to the glycosyl hydrolase 34 family. Homotetramer. Requires Ca(2+) as cofactor. N-glycosylated.

The protein localises to the virion membrane. The protein resides in the host apical cell membrane. The enzyme catalyses Hydrolysis of alpha-(2-&gt;3)-, alpha-(2-&gt;6)-, alpha-(2-&gt;8)- glycosidic linkages of terminal sialic acid residues in oligosaccharides, glycoproteins, glycolipids, colominic acid and synthetic substrates.. Its activity is regulated as follows. Inhibited by the neuraminidase inhibitors zanamivir (Relenza) and oseltamivir (Tamiflu). These drugs interfere with the release of progeny virus from infected cells and are effective against all influenza strains. Resistance to neuraminidase inhibitors is quite rare. In terms of biological role, catalyzes the removal of terminal sialic acid residues from viral and cellular glycoconjugates. Cleaves off the terminal sialic acids on the glycosylated HA during virus budding to facilitate virus release. Additionally helps virus spread through the circulation by further removing sialic acids from the cell surface. These cleavages prevent self-aggregation and ensure the efficient spread of the progeny virus from cell to cell. Otherwise, infection would be limited to one round of replication. Described as a receptor-destroying enzyme because it cleaves a terminal sialic acid from the cellular receptors. May facilitate viral invasion of the upper airways by cleaving the sialic acid moieties on the mucin of the airway epithelial cells. Likely to plays a role in the budding process through its association with lipid rafts during intracellular transport. May additionally display a raft-association independent effect on budding. Plays a role in the determination of host range restriction on replication and virulence. Sialidase activity in late endosome/lysosome traffic seems to enhance virus replication. The chain is Neuraminidase from Influenza A virus (strain A/Hong Kong/5/1983 H3N2).